We begin with the raw amino-acid sequence, 239 residues long: Ribonuclease PH (239 aa).

Residues R86 and 124–126 (GTR) each bind phosphate.

Belongs to the RNase PH family. In terms of assembly, homohexameric ring arranged as a trimer of dimers.

The catalysed reaction is tRNA(n+1) + phosphate = tRNA(n) + a ribonucleoside 5'-diphosphate. In terms of biological role, phosphorolytic 3'-5' exoribonuclease that plays an important role in tRNA 3'-end maturation. Removes nucleotide residues following the 3'-CCA terminus of tRNAs; can also add nucleotides to the ends of RNA molecules by using nucleoside diphosphates as substrates, but this may not be physiologically important. Probably plays a role in initiation of 16S rRNA degradation (leading to ribosome degradation) during starvation. This chain is Ribonuclease PH, found in Rhizobium leguminosarum bv. trifolii (strain WSM2304).